The primary structure comprises 242 residues: UPF0273 protein TM_0370 (242 aa).

A KaiC domain is found at 3-242 (KRVKTGIPGM…IYPSEGGEGR (240 aa)). ATP is bound at residue 30-37 (GGPGTGKT).

This sequence belongs to the UPF0273 family.

The chain is UPF0273 protein TM_0370 from Thermotoga maritima (strain ATCC 43589 / DSM 3109 / JCM 10099 / NBRC 100826 / MSB8).